The sequence spans 351 residues: Protein EXPRESSION OF TERPENOIDS 1 (351 aa).

The interval 1–23 (MANFFSLGGNQEQQHQEISSSQA) is disordered. Residues 11 to 22 (QEQQHQEISSSQ) show a composition bias toward low complexity. Zn(2+)-binding residues include C129, C132, C140, C145, C149, and C156. The segment at residues 129–156 (CQDCGNQAKKDCQHMRCRTCCKSRGFQC) is a DNA-binding region (zn(2)-C6 fungal-type; degenerate). Residues 170-219 (RRERQQQLAALQQQQQGHNNNNNNHKNKRQREDPSASSLVSTRLPSNTNG) are disordered. Over residues 175–193 (QQLAALQQQQQGHNNNNNN) the composition is skewed to low complexity. Residues 204–219 (SASSLVSTRLPSNTNG) show a composition bias toward polar residues. The Required for homo- and heterodimerization motif lies at 258-261 (IGGH). The interval 286–320 (TSSGGSAGGVQHHHHNSAAVATATTTSGGDATAAG) is disordered. Over residues 303 to 320 (AAVATATTTSGGDATAAG) the composition is skewed to low complexity.

Belongs to the SHI protein family. In terms of assembly, forms homodimers and heterodimers with LRP1.

Its subcellular location is the nucleus. Transcription activator involved in the transcriptional regulation of terpene biosynthesis in glandular trichomes. Binds to the promoter of the linalool synthase TPS5 and promotes TPS5 gene transactivation. Acts synergistically with MYC1 in the transactivation of TPS5. In Solanum lycopersicum (Tomato), this protein is Protein EXPRESSION OF TERPENOIDS 1.